Reading from the N-terminus, the 199-residue chain is SCO2-like protein RBE_0029 (199 aa).

Belongs to the SCO1/2 family.

In Rickettsia bellii (strain RML369-C), this protein is SCO2-like protein RBE_0029.